Consider the following 302-residue polypeptide: DDRGK domain-containing protein 1 (302 aa).

The helical transmembrane segment at 1-21 threads the bilayer; the sequence is MDPLLLGSVGVLVLAVTLIIW. The Cytoplasmic segment spans residues 22–302; that stretch reads RLLKLQWDEK…IRLETPSAAE (281 aa). The disordered stretch occupies residues 101-178; that stretch reads EYDEDGKKIG…EREEKERKEH (78 aa). Residues 118-178 show a composition bias toward basic and acidic residues; sequence QAKEEKRQMR…EREEKERKEH (61 aa).

The protein belongs to the DDRGK1 family.

It localises to the endoplasmic reticulum membrane. Substrate adapter for ufmylation, the covalent attachment of the ubiquitin-like modifier ufm-1 to substrate proteins. This is DDRGK domain-containing protein 1 from Caenorhabditis elegans.